The chain runs to 198 residues: Alpha1-proteinase inhibitor-degradation deficient protein 37 (198 aa).

Ser79 is subject to Phosphoserine.

The protein resides in the cytoplasm. Functionally, involved in ER-associated protein degradation (ERAD). The chain is Alpha1-proteinase inhibitor-degradation deficient protein 37 (ADD37) from Saccharomyces cerevisiae (strain ATCC 204508 / S288c) (Baker's yeast).